A 126-amino-acid polypeptide reads, in one-letter code: Thioredoxin domain-containing protein, mitochondrial (126 aa).

A Thioredoxin domain is found at 14-120 (SQKIATNTSF…ILEFLNHIET (107 aa)).

It belongs to the thioredoxin family.

The protein resides in the mitochondrion. The chain is Thioredoxin domain-containing protein, mitochondrial from Dictyostelium discoideum (Social amoeba).